The following is a 145-amino-acid chain: 3-hydroxyacyl-[acyl-carrier-protein] dehydratase FabZ (145 aa).

The active site involves His47.

Belongs to the thioester dehydratase family. FabZ subfamily.

It localises to the cytoplasm. The enzyme catalyses a (3R)-hydroxyacyl-[ACP] = a (2E)-enoyl-[ACP] + H2O. Involved in unsaturated fatty acids biosynthesis. Catalyzes the dehydration of short chain beta-hydroxyacyl-ACPs and long chain saturated and unsaturated beta-hydroxyacyl-ACPs. The protein is 3-hydroxyacyl-[acyl-carrier-protein] dehydratase FabZ of Chromohalobacter salexigens (strain ATCC BAA-138 / DSM 3043 / CIP 106854 / NCIMB 13768 / 1H11).